Here is a 312-residue protein sequence, read N- to C-terminus: Pantothenate kinase (312 aa).

Position 97-104 (97-104 (GSVAVGKS)) interacts with ATP.

It belongs to the prokaryotic pantothenate kinase family.

It is found in the cytoplasm. The catalysed reaction is (R)-pantothenate + ATP = (R)-4'-phosphopantothenate + ADP + H(+). Its pathway is cofactor biosynthesis; coenzyme A biosynthesis; CoA from (R)-pantothenate: step 1/5. This Mycobacterium bovis (strain BCG / Pasteur 1173P2) protein is Pantothenate kinase.